The following is a 112-amino-acid chain: uncharacterized protein (112 aa).

The signal sequence occupies residues 1–29 (MINLHRLCIIHVVATLLSTLLSLISVAIS). Asn84 carries N-linked (GlcNAc...) asparagine glycosylation. A disordered region spans residues 84–112 (NLSKGYNQRPEGSKEESHMVVKEKRKGDH). The segment covering 94 to 112 (EGSKEESHMVVKEKRKGDH) has biased composition (basic and acidic residues).

The protein localises to the secreted. This is an uncharacterized protein from Homo sapiens (Human).